We begin with the raw amino-acid sequence, 426 residues long: Gamma-glutamylputrescine oxidoreductase (426 aa).

It belongs to the gamma-glutamylputrescine oxidoreductase family.

The enzyme catalyses gamma-L-glutamylputrescine + O2 + H2O = 4-(gamma-L-glutamylamino)butanal + H2O2 + NH4(+). It functions in the pathway amine and polyamine degradation; putrescine degradation; 4-aminobutanoate from putrescine: step 2/4. In terms of biological role, involved in the breakdown of putrescine via the oxidation of L-glutamylputrescine. The polypeptide is Gamma-glutamylputrescine oxidoreductase (puuB) (Escherichia coli (strain K12)).